The sequence spans 530 residues: Autoinducer-2 kinase (530 aa).

The protein belongs to the FGGY kinase family.

It is found in the cytoplasm. It carries out the reaction (S)-4,5-dihydroxypentane-2,3-dione + ATP = (2S)-2-hydroxy-3,4-dioxopentyl phosphate + ADP + H(+). Functionally, catalyzes the phosphorylation of autoinducer-2 (AI-2) to phospho-AI-2, which subsequently inactivates the transcriptional regulator LsrR and leads to the transcription of the lsr operon. Phosphorylates the ring-open form of (S)-4,5-dihydroxypentane-2,3-dione (DPD), which is the precursor to all AI-2 signaling molecules, at the C5 position. This Yersinia pestis bv. Antiqua (strain Angola) protein is Autoinducer-2 kinase.